The chain runs to 203 residues: MARNLKSMMLCGFGLLCFLMIVDRAYAREFTVGGATGWTVPSGSQVYSQWAEQSRFQIGDSLLFVYQSNQDSVLQVTRDAYDSCNTDSPTAKFADGKTSVTLNHSGPYYFISGNKDNCKKNEKLVVIVMADRSGNKNTASSPPSPAPAPSGESAPSPPVSGTFEMTPAPTPTTSEDTPNSAASSLSFVAALLGAALASTLFLH.

The first 27 residues, 1–27 (MARNLKSMMLCGFGLLCFLMIVDRAYA), serve as a signal peptide directing secretion. Residues 28–130 (REFTVGGATG…NEKLVVIVMA (103 aa)) enclose the Phytocyanin domain. A disulfide bridge links Cys-84 with Cys-118. N-linked (GlcNAc...) asparagine glycosylation is present at Asn-103. Positions 134–181 (GNKNTASSPPSPAPAPSGESAPSPPVSGTFEMTPAPTPTTSEDTPNSA) are disordered. Ser-180 carries the GPI-anchor amidated serine lipid modification. A propeptide spans 181 to 203 (AASSLSFVAALLGAALASTLFLH) (removed in mature form).

The protein belongs to the early nodulin-like (ENODL) family. As to expression, specifically observed at the plasma membrane of sieve elements in vascular tissues of leaves, stems, roots, flowers and reproductive organs. Absent from companion cells.

The protein localises to the cell membrane. Functionally, may act as a carbohydrate transporter. Mainly required for reproductive functions. In Arabidopsis thaliana (Mouse-ear cress), this protein is Early nodulin-like protein 9.